The chain runs to 171 residues: MRAFLIGRWQPFHKGHLEIIKKISKEVDEIIIGIGSCQKSHTLTDPFTAGERMMMITKTLENYDINYYAIPINDIDYNAVWVSSVESLTPPFTTVYTGNSLVRELFSEKNYAVKKPELYNRTDYSGTKIRKKMLDGSTWEHLVPEEVVKVIEEIDGINRIRRLNEKDYDEE.

This sequence belongs to the archaeal NMN adenylyltransferase family.

It localises to the cytoplasm. It carries out the reaction beta-nicotinamide D-ribonucleotide + ATP + H(+) = diphosphate + NAD(+). It functions in the pathway cofactor biosynthesis; NAD(+) biosynthesis; NAD(+) from nicotinamide D-ribonucleotide: step 1/1. This is Nicotinamide-nucleotide adenylyltransferase from Methanococcus maripaludis (strain C5 / ATCC BAA-1333).